A 27-amino-acid chain; its full sequence is uncharacterized protein (27 aa).

Residues 3–23 (IILWAVLIIFLIGLLVVTGVF) traverse the membrane as a helical segment.

The protein resides in the cell inner membrane. This is an uncharacterized protein from Escherichia coli (strain K12).